Here is a 994-residue protein sequence, read N- to C-terminus: Protein translocase subunit SecA (994 aa).

ATP-binding positions include Gln85, Gly103–Thr107, and Asp492. Residues Ile868–Gln888 show a composition bias toward low complexity. The tract at residues Ile868–Glu994 is disordered. Residues Thr889–Pro900 show a composition bias toward pro residues. The Zn(2+) site is built by Cys973, Cys975, Cys984, and His985. Over residues Cys984 to Glu994 the composition is skewed to basic and acidic residues.

This sequence belongs to the SecA family. Monomer and homodimer. Part of the essential Sec protein translocation apparatus which comprises SecA, SecYEG and auxiliary proteins SecDF. Other proteins may also be involved. Zn(2+) serves as cofactor.

The protein localises to the cell membrane. Its subcellular location is the cytoplasm. It catalyses the reaction ATP + H2O + cellular proteinSide 1 = ADP + phosphate + cellular proteinSide 2.. Functionally, part of the Sec protein translocase complex. Interacts with the SecYEG preprotein conducting channel. Has a central role in coupling the hydrolysis of ATP to the transfer of proteins into and across the cell membrane, serving as an ATP-driven molecular motor driving the stepwise translocation of polypeptide chains across the membrane. The chain is Protein translocase subunit SecA from Frankia casuarinae (strain DSM 45818 / CECT 9043 / HFP020203 / CcI3).